A 65-amino-acid chain; its full sequence is Large ribosomal subunit protein bL35 (65 aa).

The disordered stretch occupies residues 1-65 (MQKIKTNRSA…KELKRLLPGM (65 aa)). Composition is skewed to basic residues over residues 10 to 19 (AAKRFKRTKS) and 33 to 47 (LTKK…LRKS). A compositionally biased stretch (basic and acidic residues) spans 54 to 65 (NNKELKRLLPGM).

It belongs to the bacterial ribosomal protein bL35 family.

The chain is Large ribosomal subunit protein bL35 from Desulfosudis oleivorans (strain DSM 6200 / JCM 39069 / Hxd3) (Desulfococcus oleovorans).